The primary structure comprises 611 residues: Chaperone protein DnaK (611 aa).

At threonine 173 the chain carries Phosphothreonine; by autocatalysis. 2 disordered regions span residues 525-548 (DNISEEDKSNAESKKDALKSALEG) and 573-611 (YQQAQQAQQQAQDGAQQTQNDSNVEDAEFKEVNDDEDKK). Basic and acidic residues predominate over residues 529–542 (EEDKSNAESKKDAL). Positions 574-591 (QQAQQAQQQAQDGAQQTQ) are enriched in low complexity. Basic and acidic residues predominate over residues 599–611 (AEFKEVNDDEDKK).

It belongs to the heat shock protein 70 family.

Functionally, acts as a chaperone. In Staphylococcus haemolyticus (strain JCSC1435), this protein is Chaperone protein DnaK.